A 430-amino-acid polypeptide reads, in one-letter code: Adenylosuccinate synthetase (430 aa).

GTP contacts are provided by residues 12 to 18 (GDEGKGK) and 40 to 42 (GHT). Asp-13 (proton acceptor) is an active-site residue. Asp-13 and Gly-40 together coordinate Mg(2+). IMP-binding positions include 13 to 16 (DEGK), 38 to 41 (NAGH), Thr-130, Arg-144, Gln-224, Thr-239, and Arg-303. His-41 (proton donor) is an active-site residue. Residue 299-305 (VNTGRKR) participates in substrate binding. Residues Arg-305, 331 to 333 (KLD), and 413 to 415 (STS) contribute to the GTP site.

Belongs to the adenylosuccinate synthetase family. Homodimer. Mg(2+) serves as cofactor.

The protein resides in the cytoplasm. The enzyme catalyses IMP + L-aspartate + GTP = N(6)-(1,2-dicarboxyethyl)-AMP + GDP + phosphate + 2 H(+). It participates in purine metabolism; AMP biosynthesis via de novo pathway; AMP from IMP: step 1/2. Functionally, plays an important role in the de novo pathway of purine nucleotide biosynthesis. Catalyzes the first committed step in the biosynthesis of AMP from IMP. The chain is Adenylosuccinate synthetase from Rhodopseudomonas palustris (strain BisB18).